The primary structure comprises 669 residues: Exostosin-like 1 (669 aa).

At 1 to 8 the chain is on the cytoplasmic side; that stretch reads MLWRRKSF. Residues 9 to 29 form a helical; Signal-anchor for type II membrane protein membrane-spanning segment; that stretch reads WLALSAFWLLLVLLGVFPLRL. Topologically, residues 30 to 669 are lumenal; it reads AVLPGPLPGR…RKKYRSLEKP (640 aa). N-linked (GlcNAc...) asparagine glycosylation is found at N263 and N480. An intrachain disulfide couples C577 to C627. The disordered stretch occupies residues 601–621; it reads RQHPEAVPMDSGDPRPVPEPQ.

Belongs to the glycosyltransferase 47 family.

The protein localises to the endoplasmic reticulum membrane. It carries out the reaction 3-O-{[(1-&gt;4)-beta-D-GlcA-(1-&gt;4)-alpha-D-GlcNAc](n)-(1-&gt;4)-beta-D-GlcA-(1-&gt;3)-beta-D-Gal-(1-&gt;3)-beta-D-Gal-(1-&gt;4)-beta-D-Xyl}-L-seryl-[protein] + UDP-N-acetyl-alpha-D-glucosamine = 3-O-{alpha-D-GlcNAc-[(1-&gt;4)-beta-D-GlcA-(1-&gt;4)-alpha-D-GlcNAc](n)-(1-&gt;4)-beta-D-GlcA-(1-&gt;3)-beta-D-Gal-(1-&gt;3)-beta-D-Gal-(1-&gt;4)-beta-D-Xyl}-L-seryl-[protein] + UDP + H(+). It functions in the pathway protein modification; protein glycosylation. Functionally, glycosyltransferase required for the biosynthesis of heparan-sulfate (HS). Transfers N-acetyl-alpha-D-glucosamine to the nascent HS chain (GlcNAcT-II activity). Appears to lack GlcNAcT I and GlcAT-II activities. The chain is Exostosin-like 1 (Extl1) from Mus musculus (Mouse).